We begin with the raw amino-acid sequence, 61 residues long: Small ribosomal subunit protein uS14 (61 aa).

Residues 1 to 12 (MSESETTDEPDS) are compositionally biased toward acidic residues. A disordered region spans residues 1-25 (MSESETTDEPDSETASSERTGQLES). Positions 26, 29, 44, and 47 each coordinate Zn(2+).

The protein belongs to the universal ribosomal protein uS14 family. Zinc-binding uS14 subfamily. In terms of assembly, part of the 30S ribosomal subunit. The cofactor is Zn(2+).

Binds 16S rRNA, required for the assembly of 30S particles. The polypeptide is Small ribosomal subunit protein uS14 (Haloarcula marismortui (strain ATCC 43049 / DSM 3752 / JCM 8966 / VKM B-1809) (Halobacterium marismortui)).